Reading from the N-terminus, the 708-residue chain is Polyribonucleotide nucleotidyltransferase (708 aa).

Positions 488 and 494 each coordinate Mg(2+). The KH domain maps to 555–615; the sequence is PIIKVTKVDP…ENVDKAIELI (61 aa). The S1 motif domain maps to 625–692; the sequence is GEVLEGKVTR…DLGRLQFKRV (68 aa).

It belongs to the polyribonucleotide nucleotidyltransferase family. Mg(2+) serves as cofactor.

The protein resides in the cytoplasm. It catalyses the reaction RNA(n+1) + phosphate = RNA(n) + a ribonucleoside 5'-diphosphate. Its function is as follows. Involved in mRNA degradation. Catalyzes the phosphorolysis of single-stranded polyribonucleotides processively in the 3'- to 5'-direction. The polypeptide is Polyribonucleotide nucleotidyltransferase (Thermotoga sp. (strain RQ2)).